Reading from the N-terminus, the 162-residue chain is Caveolin-2 (162 aa).

At Met1 to Lys86 the chain is on the cytoplasmic side. Position 19 is a phosphotyrosine; by SRC (Tyr19). Phosphoserine occurs at positions 20 and 23. Residue Tyr27 is modified to Phosphotyrosine; by SRC. Residue Ser36 is modified to Phosphoserine. Positions Phe87–Leu107 form an intramembrane region, helical. Over Ser108 to Asp162 the chain is Cytoplasmic.

The protein belongs to the caveolin family. In terms of assembly, monomer or homodimer. Interacts with CAV1; the interaction forms a stable heterooligomeric complex that is required for targeting to lipid rafts and for caveolae formation. Tyrosine phosphorylated forms do not form heterooligomers with the Tyr-19-phosphorylated form existing as a monomer or dimer, and the Tyr-27-form as a monomer only. Interacts (tyrosine phosphorylated form) with the SH2 domain-containing proteins, RASA1, NCK1 and SRC. Interacts (tyrosine phosphorylated form) with INSR, the interaction (Tyr-27-phosphorylated form) is increased on insulin stimulation. Interacts (Tyr-19 phosphorylated form) with MAPK1 (phosphorylated form); the interaction, promoted by insulin, leads to nuclear location and MAPK1 activation. Interacts with STAT3; the interaction is increased on insulin-induced tyrosine phosphorylation leading to STAT activation. In terms of processing, phosphorylated on serine and tyrosine residues. CAV1 promotes phosphorylation on Ser-23 which then targets the complex to the plasma membrane, lipid rafts and caveolae. Phosphorylation on Ser-36 appears to modulate mitosis in endothelial cells. Phosphorylation on both Tyr-19 and Tyr-27 is required for insulin-induced 'Ser-727' phosphorylation of STAT3 and its activation. Phosphorylation on Tyr-19 is required for insulin-induced phosphorylation of MAPK1 and DNA binding of STAT3. Tyrosine phosphorylation is induced by both EGF and insulin (By. similarity).

The protein localises to the nucleus. It localises to the cytoplasm. It is found in the golgi apparatus membrane. The protein resides in the cell membrane. Its subcellular location is the membrane. The protein localises to the caveola. May act as a scaffolding protein within caveolar membranes. Interacts directly with G-protein alpha subunits and can functionally regulate their activity. Acts as an accessory protein in conjunction with CAV1 in targeting to lipid rafts and driving caveolae formation. The Ser-36 phosphorylated form has a role in modulating mitosis in endothelial cells. Positive regulator of cellular mitogenesis of the MAPK signaling pathway. Required for the insulin-stimulated nuclear translocation and activation of MAPK1 and STAT3, and the subsequent regulation of cell cycle progression. This is Caveolin-2 (CAV2) from Chlorocebus aethiops (Green monkey).